The following is a 232-amino-acid chain: Charged multivesicular body protein 4c (232 aa).

2 disordered regions span residues 1 to 23 (MSKL…PSAQ) and 177 to 232 (NKKM…AWAT). Residues 1–153 (MSKLGKFFKG…EISEAFSQRV (153 aa)) form an intramolecular interaction with C-terminus region. 2 coiled-coil regions span residues 21 to 45 (SAQE…YLEN) and 125 to 185 (LNKI…SLEL). The tract at residues 154–232 (QFADGFDEAE…DFKQLAAWAT (79 aa)) is intramolecular interaction with N-terminus. Phosphoserine; by AURKB is present on Ser-210.

The protein belongs to the SNF7 family. Probable core component of the endosomal sorting required for transport complex III (ESCRT-III). ESCRT-III components are thought to multimerize to form a flat lattice on the perimeter membrane of the endosome. Several assembly forms of ESCRT-III may exist that interact and act sequentially. Self-associates. Interacts with CHMP2A. Interacts with CHMP4A. Interacts with CHMP4B. Interacts with CHMP6. Interacts with VPS4A. Interacts with PDCD6IP; the interaction is direct. Phosphorylated at Ser-210 by AURKB during cytokinesis: together with ZFYVE19/ANCHR, phosphorylated CHMP4C retains abscission-competent VPS4 (VPS4A and/or VPS4B) at the midbody ring until abscission checkpoint signaling is terminated at late cytokinesis.

It localises to the cytoplasm. It is found in the cytosol. The protein resides in the late endosome membrane. Its subcellular location is the midbody. The protein localises to the midbody ring. Functionally, probable core component of the endosomal sorting required for transport complex III (ESCRT-III) which is involved in multivesicular bodies (MVBs) formation and sorting of endosomal cargo proteins into MVBs. MVBs contain intraluminal vesicles (ILVs) that are generated by invagination and scission from the limiting membrane of the endosome and mostly are delivered to lysosomes enabling degradation of membrane proteins, such as stimulated growth factor receptors, lysosomal enzymes and lipids. The MVB pathway appears to require the sequential function of ESCRT-O, -I,-II and -III complexes. ESCRT-III proteins mostly dissociate from the invaginating membrane before the ILV is released. The ESCRT machinery also functions in topologically equivalent membrane fission events, such as the terminal stages of cytokinesis. Key component of the cytokinesis checkpoint, a process required to delay abscission to prevent both premature resolution of intercellular chromosome bridges and accumulation of DNA damage: upon phosphorylation by AURKB, together with ZFYVE19/ANCHR, retains abscission-competent VPS4 (VPS4A and/or VPS4B) at the midbody ring until abscission checkpoint signaling is terminated at late cytokinesis. Deactivation of AURKB results in dephosphorylation of CHMP4C followed by its dissociation from ANCHR and VPS4 and subsequent abscission. ESCRT-III proteins are believed to mediate the necessary vesicle extrusion and/or membrane fission activities, possibly in conjunction with the AAA ATPase VPS4. CHMP4A/B/C are required for the exosomal release of SDCBP, CD63 and syndecan. The protein is Charged multivesicular body protein 4c (Chmp4c) of Mus musculus (Mouse).